The sequence spans 1955 residues: 227 kDa spindle- and centromere-associated protein (1955 aa).

Coiled-coil stretches lie at residues Lys-82–Val-129, Glu-152–Ser-317, Val-385–Leu-1747, and Glu-1770–Ile-1813. 2 disordered regions span residues Pro-1865 to Tyr-1896 and Met-1912 to Glu-1955. Residues Arg-1878–Tyr-1896 are compositionally biased toward polar residues. A compositionally biased stretch (basic residues) spans Arg-1938 to Gln-1948.

Its subcellular location is the cytoplasm. The protein localises to the cytoskeleton. The protein resides in the microtubule organizing center. It is found in the centrosome. It localises to the chromosome. Its subcellular location is the centromere. The protein localises to the kinetochore. The protein resides in the spindle. In terms of biological role, may play a role in the organization of the spindle apparatus and its interaction with the centromeres. The sequence is that of 227 kDa spindle- and centromere-associated protein (PUMA1) from Parascaris univalens (Nematode worm).